Reading from the N-terminus, the 585-residue chain is Probable multidrug resistance ABC transporter ATP-binding/permease protein YheI (585 aa).

Residues 19–304 enclose the ABC transmembrane type-1 domain; sequence YTIAIVLLLA…IGELINVMQR (286 aa). 6 helical membrane-spanning segments follow: residues 21–41, 57–77, 127–147, 149–169, 249–269, and 279–299; these read IAIV…KLLG, LLFY…MSYF, AVSL…MFMM, IFLT…IIPL, VKLL…FLVF, and VSFN…GELI. Residues 337 to 572 form the ABC transporter domain; sequence IVFSHVSFTY…NGWYREQYER (236 aa). Position 371 to 378 (371 to 378) interacts with ATP; it reads GKTGSGKT.

Belongs to the ABC transporter superfamily. As to quaternary structure, heterodimer composed of YheH and YheI.

It is found in the cell membrane. With respect to regulation, inhibited by ortho-vanadate. Its function is as follows. Involved in the transport of four structurally unrelated drugs, including doxorubicin and mitoxantrone. Transmembrane domains (TMD) form a pore in the membrane and the ATP-binding domain (NBD) is responsible for energy generation. In Bacillus subtilis (strain 168), this protein is Probable multidrug resistance ABC transporter ATP-binding/permease protein YheI (yheI).